The chain runs to 256 residues: Stage 0 sporulation protein A homolog (256 aa).

The Response regulatory domain maps to 5–123 (KVLIADDNRE…VLGNRLRQLA (119 aa)). Asp-10, Asp-11, and Asp-56 together coordinate Ca(2+). Asp-56 bears the 4-aspartylphosphate mark. Residues 188–207 (PLIARKYMTTPSRVERAIRH) constitute a DNA-binding region (H-T-H motif).

Ca(2+) is required as a cofactor.

The protein localises to the cytoplasm. Functionally, may play the central regulatory role in sporulation. It may be an element of the effector pathway responsible for the activation of sporulation genes in response to nutritional stress. Spo0A may act in concert with spo0H (a sigma factor) to control the expression of some genes that are critical to the sporulation process. The protein is Stage 0 sporulation protein A homolog (spo0A) of Moorella thermoacetica (strain ATCC 39073 / JCM 9320).